The chain runs to 405 residues: Tryptophan synthase beta chain (405 aa).

The residue at position 95 (Lys95) is an N6-(pyridoxal phosphate)lysine.

Belongs to the TrpB family. As to quaternary structure, tetramer of two alpha and two beta chains. It depends on pyridoxal 5'-phosphate as a cofactor.

It catalyses the reaction (1S,2R)-1-C-(indol-3-yl)glycerol 3-phosphate + L-serine = D-glyceraldehyde 3-phosphate + L-tryptophan + H2O. It participates in amino-acid biosynthesis; L-tryptophan biosynthesis; L-tryptophan from chorismate: step 5/5. Functionally, the beta subunit is responsible for the synthesis of L-tryptophan from indole and L-serine. This Pseudomonas putida (strain ATCC 47054 / DSM 6125 / CFBP 8728 / NCIMB 11950 / KT2440) protein is Tryptophan synthase beta chain.